The following is a 443-amino-acid chain: Glutamine synthetase (443 aa).

One can recognise a GS beta-grasp domain in the interval N16 to G101. In terms of domain architecture, GS catalytic spans P108–Y443. Mg(2+)-binding residues include E131 and E133. ATP is bound at residue E183. The Mg(2+) site is built by E188 and E195. Residues N239–G240 and G240 each bind L-glutamate. Mg(2+) is bound at residue H244. S248 provides a ligand contact to ATP. R297, E303, and R315 together coordinate L-glutamate. Positions 315 and 320 each coordinate ATP. Mg(2+) is bound at residue E332. R334 serves as a coordination point for L-glutamate.

It belongs to the glutamine synthetase family. In terms of assembly, oligomer of 12 subunits arranged in the form of two hexagons. In its feedback-inhibited form, interacts with TnrA in order to block its DNA-binding activity. The cofactor is Mg(2+).

The protein localises to the cytoplasm. The catalysed reaction is L-glutamate + NH4(+) + ATP = L-glutamine + ADP + phosphate + H(+). With respect to regulation, inhibited by glutamine. In terms of biological role, glutamine synthetase (GS) is an unusual multitasking protein that functions as an enzyme, a transcription coregulator, and a chaperone in ammonium assimilation and in the regulation of genes involved in nitrogen metabolism. It catalyzes the ATP-dependent biosynthesis of glutamine from glutamate and ammonia. Feedback-inhibited GlnA also interacts with and regulates the activity of the transcriptional regulator TnrA. During nitrogen limitation, TnrA is in its DNA-binding active state and turns on the transcription of genes required for nitrogen assimilation. Under conditions of nitrogen excess, feedback-inhibited GlnA forms a stable complex with TnrA, which inhibits its DNA-binding activity. In contrast, feedback-inhibited GlnA acts as a chaperone to stabilize the DNA-binding activity of GlnR, which represses the transcription of nitrogen assimilation genes. This is Glutamine synthetase from Clostridium saccharobutylicum.